A 381-amino-acid chain; its full sequence is Estradiol 17-beta-dehydrogenase 2 (381 aa).

The chain crosses the membrane as a helical; Signal-anchor for type II membrane protein span at residues 4–24; sequence FSSESAWLCLTATAVLGGMLL. 83–112 lines the NAD(+) pocket; it reads QKAVLVTGADSGFGHALAKHLDKLGFTVFA. A substrate-binding site is contributed by Ser-220. Residue Tyr-233 is the Proton acceptor of the active site.

Belongs to the short-chain dehydrogenases/reductases (SDR) family. As to quaternary structure, homodimer. In terms of tissue distribution, highly expressed in the placenta, and in the small intestine, and liver.

Its subcellular location is the endoplasmic reticulum membrane. It catalyses the reaction 17beta-estradiol + NAD(+) = estrone + NADH + H(+). The catalysed reaction is testosterone + NAD(+) = androst-4-ene-3,17-dione + NADH + H(+). It carries out the reaction 17beta-hydroxy-5alpha-androstan-3-one + NAD(+) = 5alpha-androstan-3,17-dione + NADH + H(+). The enzyme catalyses (20S)-hydroxypregn-4-en-3-one + NAD(+) = progesterone + NADH + H(+). Functionally, catalyzes the NAD-dependent oxidation of highly active 17beta-hydroxysteroids, such as estradiol (E2), testosterone (T), and dihydrotestosterone (DHT), to their less active forms and thus regulates the biological potency of these steroids. Oxidizes estradiol to estrone, testosterone to androstenedione, and dihydrotestosterone to 5alpha-androstan-3,17-dione. Also has 20-alpha-HSD activity. The sequence is that of Estradiol 17-beta-dehydrogenase 2 (Hsd17b2) from Rattus norvegicus (Rat).